The chain runs to 262 residues: Acyl-[acyl-carrier-protein]--UDP-N-acetylglucosamine O-acyltransferase (262 aa).

This sequence belongs to the transferase hexapeptide repeat family. LpxA subfamily. In terms of assembly, homotrimer.

The protein localises to the cytoplasm. It catalyses the reaction a (3R)-hydroxyacyl-[ACP] + UDP-N-acetyl-alpha-D-glucosamine = a UDP-3-O-[(3R)-3-hydroxyacyl]-N-acetyl-alpha-D-glucosamine + holo-[ACP]. The protein operates within glycolipid biosynthesis; lipid IV(A) biosynthesis; lipid IV(A) from (3R)-3-hydroxytetradecanoyl-[acyl-carrier-protein] and UDP-N-acetyl-alpha-D-glucosamine: step 1/6. Involved in the biosynthesis of lipid A, a phosphorylated glycolipid that anchors the lipopolysaccharide to the outer membrane of the cell. This is Acyl-[acyl-carrier-protein]--UDP-N-acetylglucosamine O-acyltransferase from Shigella boydii serotype 18 (strain CDC 3083-94 / BS512).